The following is a 574-amino-acid chain: Man(5)GlcNAc(2)-PP-dolichol translocation protein RFT1 (574 aa).

At Met-1 to Thr-24 the chain is on the lumenal side. A helical membrane pass occupies residues Phe-25–Ile-45. Residues Arg-46 to Leu-48 are Cytoplasmic-facing. A helical membrane pass occupies residues Ser-49–Phe-69. Topologically, residues Ser-70–Ala-110 are lumenal. The helical transmembrane segment at Val-111–Trp-131 threads the bilayer. The Cytoplasmic portion of the chain corresponds to Gln-132–Trp-148. The chain crosses the membrane as a helical span at residues Ser-149 to Val-169. The Lumenal segment spans residues Asn-170–Arg-181. A helical transmembrane segment spans residues Phe-182–Gln-202. The Cytoplasmic portion of the chain corresponds to Gln-203–Glu-218. Residues Gly-219–Cys-239 traverse the membrane as a helical segment. Residues Tyr-240–Gln-319 lie on the Lumenal side of the membrane. The helical transmembrane segment at Gly-320 to Ile-340 threads the bilayer. Topologically, residues Glu-341–Arg-372 are cytoplasmic. Residues Phe-373–Leu-393 traverse the membrane as a helical segment. Topologically, residues Gln-394–Tyr-413 are lumenal. Residues Cys-414–Ala-434 traverse the membrane as a helical segment. Residues Thr-435 to Ser-443 are Cytoplasmic-facing. Residues Tyr-444–Leu-464 form a helical membrane-spanning segment. The Lumenal portion of the chain corresponds to Lys-465 to Glu-469. A helical transmembrane segment spans residues Gly-470 to Leu-490. Residues Asn-491–Asp-509 lie on the Cytoplasmic side of the membrane. The helical transmembrane segment at Phe-510 to Tyr-530 threads the bilayer. Residues Val-531–Lys-532 lie on the Lumenal side of the membrane. A helical membrane pass occupies residues Asn-533–Val-553. Topologically, residues Lys-554–Val-574 are cytoplasmic.

This sequence belongs to the RFT1 family.

The protein resides in the endoplasmic reticulum membrane. The protein operates within protein modification; protein glycosylation. Intramembrane glycolipid transporter that operates in the biosynthetic pathway of dolichol-linked oligosaccharides, the glycan precursors employed in protein asparagine (N)-glycosylation. The sequential addition of sugars to dolichol pyrophosphate produces dolichol-linked oligosaccharides containing fourteen sugars, including two GlcNAcs, nine mannoses and three glucoses. Once assembled, the oligosaccharide is transferred from the lipid to nascent proteins by oligosaccharyltransferases. The assembly of dolichol-linked oligosaccharides begins on the cytosolic side of the endoplasmic reticulum membrane and finishes in its lumen. RFT1 could mediate the translocation of the cytosolically oriented intermediate DolPP-GlcNAc2Man5, produced by ALG11, into the ER lumen where dolichol-linked oligosaccharides assembly continues. However, the intramembrane lipid transporter activity could not be confirmed in vitro. This is Man(5)GlcNAc(2)-PP-dolichol translocation protein RFT1 from Saccharomyces cerevisiae (strain ATCC 204508 / S288c) (Baker's yeast).